We begin with the raw amino-acid sequence, 1403 residues long: MATQQKASDERISQFDHNLLPELSALLGLDAVQLAKELEEEEQKERAKMQKGYNSQMRSEAKRLKTFVTYEPYSSWIPQEMAAAGFYFTGVKSGIQCFCCSLILFGAGLTRLPIEDHKRFHPDCGFLLNKDVGNIAKYDIRVKNLKSRLRGGKMRYQEEEARLASFRNWPFYVQGISPCVLSEAGFVFTGKQDTVQCFSCGGCLGNWEEGDDPWKEHAKWFPKCEFLRSKKSSEEITQYIQSYKGFVDITGEHFVNSWVQRELPMASAYCNDSIFAYEELRLDSFKDWPRESAVGVAALAKAGLFYTGIKDIVQCFSCGGCLEKWQEGDDPLDDHTRCFPNCPFLQNMKSSAEVTPDLQSRGELCELLETTSESNLEDSIAVGPIVPEMAQGEAQWFQEAKNLNEQLRAAYTSASFRHMSLLDISSDLATDHLLGCDLSIASKHISKPVQEPLVLPEVFGNLNSVMCVEGEAGSGKTVLLKKIAFLWASGCCPLLNRFQLVFYLSLSSTRPDEGLASIICDQLLEKEGSVTEMCVRNIIQQLKNQVLFLLDDYKEICSIPQVIGKLIQKNHLSRTCLLIAVRTNRARDIRRYLETILEIKAFPFYNTVCILRKLFSHNMTRLRKFMVYFGKNQSLQKIQKTPLFVAAICAHWFQYPFDPSFDDVAVFKSYMERLSLRNKATAEILKATVSSCGELALKGFFSCCFEFNDDDLAEAGVDEDEDLTMCLMSKFTAQRLRPFYRFLSPAFQEFLAGMRLIELLDSDRQEHQDLGLYHLKQINSPMMTVSAYNNFLNYVSSLPSTKAGPKIVSHLLHLVDNKESLENISENDDYLKHQPEISLQMQLLRGLWQICPQAYFSMVSEHLLVLALKTAYQSNTVAACSPFVLQFLQGRTLTLGALNLQYFFDHPESLSLLRSIHFPIRGNKTSPRAHFSVLETCFDKSQVPTIDQDYASAFEPMNEWERNLAEKEDNVKSYMDMQRRASPDLSTGYWKLSPKQYKIPCLEVDVNDIDVVGQDMLEILMTVFSASQRIELHLNHSRGFIESIRPALELSKASVTKCSISKLELSAAEQELLLTLPSLESLEVSGTIQSQDQIFPNLDKFLCLKELSVDLEGNINVFSVIPEEFPNFHHMEKLLIQISAEYDPSKLVKLIQNSPNLHVFHLKCNFFSDFGSLMTMLVSCKKLTEIKFSDSFFQAVPFVASLPNFISLKILNLEGQQFPDEETSEKFAYILGSLSNLEELILPTGDGIYRVAKLIIQQCQQLHCLRVLSFFKTLNDDSVVEIAKVAISGGFQKLENLKLSINHKITEEGYRNFFQALDNMPNLQELDISRHFTECIKAQATTVKSLSQCVLRLPRLIRLNMLSWLLDADDIALLNVMKERHPQSKYLTILQKWILPFSPIIQK.

BIR repeat units lie at residues 60–127 (EAKR…CGFL), 159–227 (EEAR…CEFL), and 278–345 (EELR…CPFL). Zn(2+) contacts are provided by cysteine 315, cysteine 318, histidine 335, and cysteine 342. Residues 464-758 (SVMCVEGEAG…EFLAGMRLIE (295 aa)) form the NACHT domain. An ATP-binding site is contributed by 473–478 (GSGKTV).

Interacts (via NACHT domain) with APAF1 (via CARD and NACHT domains). Interacts with C.violaceum needle protein CprI. As to expression, expressed in motor neurons, but not in sensory neurons. Found in liver and placenta, and to a lesser extent in spinal cord.

In terms of biological role, anti-apoptotic protein which acts by inhibiting the activities of CASP3, CASP7 and CASP9. Can inhibit the autocleavage of pro-CASP9 and cleavage of pro-CASP3 by CASP9. Capable of inhibiting CASP9 autoproteolysis at 'Asp-315' and decreasing the rate of auto proteolysis at 'Asp-330'. Acts as a mediator of neuronal survival in pathological conditions. Prevents motor-neuron apoptosis induced by a variety of signals. Possible role in the prevention of spinal muscular atrophy that seems to be caused by inappropriate persistence of motor-neuron apoptosis: mutated or deleted forms of NAIP have been found in individuals with severe spinal muscular atrophy. Its function is as follows. Acts as a sensor component of the NLRC4 inflammasome that specifically recognizes and binds needle protein CprI from pathogenic bacteria C.violaceum. Association of pathogenic bacteria proteins drives in turn drive assembly and activation of the NLRC4 inflammasome, promoting caspase-1 activation, cytokine production and macrophage pyroptosis. The NLRC4 inflammasome is activated as part of the innate immune response to a range of intracellular bacteria such as C.violaceum and L.pneumophila. This is Baculoviral IAP repeat-containing protein 1 (NAIP) from Homo sapiens (Human).